Here is a 492-residue protein sequence, read N- to C-terminus: Aspartyl/glutamyl-tRNA(Asn/Gln) amidotransferase subunit B (492 aa).

It belongs to the GatB/GatE family. GatB subfamily. As to quaternary structure, heterotrimer of A, B and C subunits.

The enzyme catalyses L-glutamyl-tRNA(Gln) + L-glutamine + ATP + H2O = L-glutaminyl-tRNA(Gln) + L-glutamate + ADP + phosphate + H(+). It carries out the reaction L-aspartyl-tRNA(Asn) + L-glutamine + ATP + H2O = L-asparaginyl-tRNA(Asn) + L-glutamate + ADP + phosphate + 2 H(+). In terms of biological role, allows the formation of correctly charged Asn-tRNA(Asn) or Gln-tRNA(Gln) through the transamidation of misacylated Asp-tRNA(Asn) or Glu-tRNA(Gln) in organisms which lack either or both of asparaginyl-tRNA or glutaminyl-tRNA synthetases. The reaction takes place in the presence of glutamine and ATP through an activated phospho-Asp-tRNA(Asn) or phospho-Glu-tRNA(Gln). This Prochlorococcus marinus (strain SARG / CCMP1375 / SS120) protein is Aspartyl/glutamyl-tRNA(Asn/Gln) amidotransferase subunit B.